A 619-amino-acid chain; its full sequence is Protein DFG16 (619 aa).

Position 1 (Met1) is a topological domain, extracellular. The helical transmembrane segment at Ile2–Ala22 threads the bilayer. At Tyr23–Met167 the chain is on the cytoplasmic side. Residues Pro33–Asp54 are disordered. Positions Lys44–Asp54 are enriched in basic and acidic residues. Residues Ile168–Leu188 form a helical membrane-spanning segment. At Leu189–Val203 the chain is on the extracellular side. The chain crosses the membrane as a helical span at residues Tyr204–Phe224. Residues Asp225 to His291 are Cytoplasmic-facing. The helical transmembrane segment at Ile292–Leu312 threads the bilayer. At Trp313 to Lys321 the chain is on the extracellular side. The chain crosses the membrane as a helical span at residues Val322–Phe342. The Cytoplasmic portion of the chain corresponds to Thr343 to Thr378. Residues Ile379–Phe399 form a helical membrane-spanning segment. Residues Ala400–Thr410 lie on the Extracellular side of the membrane. Residues Phe411 to Val431 form a helical membrane-spanning segment. At Leu432–Asp619 the chain is on the cytoplasmic side. 2 stretches are compositionally biased toward polar residues: residues Lys485–Trp504 and Lys526–Lys549. Disordered regions lie at residues Lys485–Ser506 and Ile520–His586. Basic residues predominate over residues Gln552–Thr561.

Its subcellular location is the membrane. In terms of biological role, involved in invasion during filamentous growth. This Saccharomyces cerevisiae (strain ATCC 204508 / S288c) (Baker's yeast) protein is Protein DFG16 (DFG16).